Reading from the N-terminus, the 309-residue chain is Olfactory receptor 8B4 (309 aa).

Topologically, residues 1–25 (MTLRNSSSVTEFILVGLSEQPELQL) are extracellular. Asparagine 5 carries N-linked (GlcNAc...) asparagine glycosylation. The helical transmembrane segment at 26 to 46 (PLFLLFLGIYVFTVVGNLGLI) threads the bilayer. Topologically, residues 47 to 54 (TLIGINPS) are cytoplasmic. Residues 55-75 (LHTPMYFFLFNLSFIDLCYSC) form a helical membrane-spanning segment. The Extracellular segment spans residues 76 to 98 (VFTPKMLNDFVSESIISYVGCMT). Cysteine 96 and cysteine 188 form a disulfide bridge. A helical membrane pass occupies residues 99–119 (QLFFFCFFVNSECYVLVSMAY). The Cytoplasmic segment spans residues 120–138 (DRYVAICNPLLYMVTMSPR). Residues 139-159 (VCFLLMFGSYVVGFAGAMAHT) form a helical membrane-spanning segment. Topologically, residues 160 to 196 (GSMLRLTFCDSNVIDHYLCDVLPLLQLSCTSTHVSEL) are extracellular. A helical membrane pass occupies residues 197–216 (VFFIVVGVITMLSSISIVIS). The Cytoplasmic portion of the chain corresponds to 217–236 (YALILSNILCIPSAEGRSKA). Residues 237-257 (FSTWGSHIIAVALFFGSGTFT) form a helical membrane-spanning segment. The Extracellular portion of the chain corresponds to 258 to 270 (YLTTSFPGSMNHG). The helical transmembrane segment at 271-291 (RFASVFYTNVVPMLNPSIYSL) threads the bilayer. The Cytoplasmic portion of the chain corresponds to 292-309 (RNKDDKLALGKTLKRVLF).

It belongs to the G-protein coupled receptor 1 family.

The protein localises to the cell membrane. In terms of biological role, odorant receptor. This chain is Olfactory receptor 8B4 (OR8B4), found in Homo sapiens (Human).